The following is a 739-amino-acid chain: Exocyst complex component 3-like protein (739 aa).

2 disordered regions span residues 1–21 and 698–718; these read MDSK…PEWP and AALS…RRAL. The segment at 1–370 is mediates interaction with EXOC2, EXOC4 and EXOC5; the sequence is MDSKIQPTLR…DVSQLEPLLT (370 aa).

The protein belongs to the SEC6 family. In terms of assembly, interacts with EXOC2, EXOC4 and EXOC5; may be part of the exocyst. In terms of tissue distribution, ubiquitously expressed.

The protein resides in the cytoplasmic vesicle. Its subcellular location is the secretory vesicle. In terms of biological role, as part of the exocyst, may play a role in regulated exocytosis of insulin granules. The chain is Exocyst complex component 3-like protein (Exoc3l1) from Mus musculus (Mouse).